The chain runs to 255 residues: 5-oxoprolinase subunit A (255 aa).

It belongs to the LamB/PxpA family. In terms of assembly, forms a complex composed of PxpA, PxpB and PxpC.

The enzyme catalyses 5-oxo-L-proline + ATP + 2 H2O = L-glutamate + ADP + phosphate + H(+). Its function is as follows. Catalyzes the cleavage of 5-oxoproline to form L-glutamate coupled to the hydrolysis of ATP to ADP and inorganic phosphate. This is 5-oxoprolinase subunit A from Thermococcus sibiricus (strain DSM 12597 / MM 739).